The primary structure comprises 259 residues: Adenosylcobinamide-GDP ribazoletransferase (259 aa).

5 consecutive transmembrane segments (helical) span residues 43 to 63, 64 to 84, 116 to 136, 141 to 161, and 185 to 205; these read LAGA…LGLG, ASSM…TGAL, FGVL…ASLV, PINV…LMVW, and TLYT…APVT.

The protein belongs to the CobS family. Requires Mg(2+) as cofactor.

Its subcellular location is the cell inner membrane. It carries out the reaction alpha-ribazole + adenosylcob(III)inamide-GDP = adenosylcob(III)alamin + GMP + H(+). The catalysed reaction is alpha-ribazole 5'-phosphate + adenosylcob(III)inamide-GDP = adenosylcob(III)alamin 5'-phosphate + GMP + H(+). Its pathway is cofactor biosynthesis; adenosylcobalamin biosynthesis; adenosylcobalamin from cob(II)yrinate a,c-diamide: step 7/7. Functionally, joins adenosylcobinamide-GDP and alpha-ribazole to generate adenosylcobalamin (Ado-cobalamin). Also synthesizes adenosylcobalamin 5'-phosphate from adenosylcobinamide-GDP and alpha-ribazole 5'-phosphate. The sequence is that of Adenosylcobinamide-GDP ribazoletransferase from Allorhizobium ampelinum (strain ATCC BAA-846 / DSM 112012 / S4) (Agrobacterium vitis (strain S4)).